Reading from the N-terminus, the 230-residue chain is RNA-binding riboflavin kinase RibR (230 aa).

Belongs to the RibR family.

It carries out the reaction riboflavin + ATP = FMN + ADP + H(+). In terms of biological role, may be directly involved in the regulation of the rib genes. C-terminal part of RibR specifically binds to RFN of the rib leader of the riboflavin biosynthetic operon. The RFN element is a sequence within the rib-leader mRNA reported to serve as a receptor for an FMN-dependent riboswitch. Possibly, RibR produces the comodulator FMN through its own N-terminal flavokinase activity. FMN-activated RibR may stabilize the anti-anti terminator structure of RFN mRNA, causing transcription termination of the rib genes in trans. This is RNA-binding riboflavin kinase RibR (ribR) from Bacillus subtilis (strain 168).